Here is a 300-residue protein sequence, read N- to C-terminus: L-threonine kinase (300 aa).

92–102 (PVAKGMASSTA) serves as a coordination point for ATP.

It belongs to the GHMP kinase family. PduX subfamily.

It is found in the cytoplasm. It carries out the reaction L-threonine + ATP = O-phospho-L-threonine + ADP + H(+). It participates in cofactor biosynthesis; adenosylcobalamin biosynthesis. It functions in the pathway polyol metabolism; 1,2-propanediol degradation. L-threonine kinase that catalyzes the conversion of L-threonine to L-threonine-O-3-phosphate. Involved in the de novo synthesis of adenosylcobalamin (coenzyme B12) and the assimilation of cobyric acid. Uses ATP; the activity with CTP, GTP or UTP is 6, 11, and 3% of the activity with ATP, respectively. In terms of biological role, the 1,2-propanediol (1,2-PD)-specific bacterial microcompartment (BMC) concentrates low levels of 1,2-PD catabolic enzymes, concentrates volatile reaction intermediates thus enhancing pathway flux and keeps the level of toxic, mutagenic propionaldehyde low. This gene probably benefits from its induction via the Pdu promoter, rather than a physical interaction with the BMC. The polypeptide is L-threonine kinase (Salmonella typhimurium (strain LT2 / SGSC1412 / ATCC 700720)).